The sequence spans 702 residues: Lipase maturation factor 2 (702 aa).

8 helical membrane-spanning segments follow: residues 10–30 (LFLQGVAAVYLFAFASLYTQI), 75–95 (AQGLDLLTLLGTVLALGALLL), 164–184 (DLPFWLVRWLLFRLMFASGVV), 226–246 (LSVVATFLIEIAVPPLFFAPI), 259–279 (LLQVLIIITGNYNFFNLLTLV), 316–336 (LLLELTVYGLLAYGTVYYFGL), 363–383 (VTLPTVWLGTASLAWELLVVL), and 398–418 (AGIQLSVLGTATVALFLISLV). N-linked (GlcNAc...) asparagine glycosylation occurs at Asn488. Residues 636–656 (ILLWGLFGAVVAIRVVQTLLA) form a helical membrane-spanning segment. A disordered region spans residues 660–702 (LQSSKQTREEKRKQTSKKDSRAASEQAAANSNSRDSWAPRRKK). The span at 665–681 (QTREEKRKQTSKKDSRA) shows a compositional bias: basic and acidic residues. Positions 682–693 (ASEQAAANSNSR) are enriched in low complexity.

This sequence belongs to the lipase maturation factor family.

It is found in the endoplasmic reticulum membrane. Its function is as follows. Involved in the maturation of specific proteins in the endoplasmic reticulum. May be required for maturation and transport of active lipoprotein lipase (LPL) through the secretory pathway. This Mus musculus (Mouse) protein is Lipase maturation factor 2 (Lmf2).